The sequence spans 172 residues: MPSPAAPRPNRQSRNLQVGEWGEQLVCQWLTQQQWHILDRRWHCRWGEIDIIARSNPPLPGQDSNTRLAFVEVKTRRAQNWDADGLLAITPQKQQKLWKTAQLYLKKHPELAELFCQFDVALVQCNLNSNSPSKTVHVQDDLQVTTVEINQPIHVRGYQFMLLDYIESAFTL.

The protein belongs to the UPF0102 family.

This Acaryochloris marina (strain MBIC 11017) protein is UPF0102 protein AM1_3954.